The chain runs to 71 residues: UPF0337 protein PPA1427 (71 aa).

Residues 20 to 46 (EKIGGLTDDSDLKSAGADQKASGKVAQ) are disordered.

This sequence belongs to the UPF0337 (CsbD) family.

This chain is UPF0337 protein PPA1427, found in Cutibacterium acnes (strain DSM 16379 / KPA171202) (Propionibacterium acnes).